Here is a 67-residue protein sequence, read N- to C-terminus: Phycobilisome 7.8 kDa linker polypeptide, allophycocyanin-associated, core (67 aa).

In terms of domain architecture, CpcD-like spans 1-56; sequence MRMFRITACLPSPSKIRTQRELQNTFFTKLVPYDAWFREQQRIQKLGGKIIKVELA.

The protein belongs to the phycobilisome linker protein family.

Its subcellular location is the cellular thylakoid membrane. Rod linker protein, associated with allophycocyanin. Linker polypeptides determine the state of aggregation and the location of the disk-shaped phycobiliprotein units within the phycobilisome and modulate their spectroscopic properties in order to mediate a directed and optimal energy transfer. In Synechococcus sp. (strain ATCC 27144 / PCC 6301 / SAUG 1402/1) (Anacystis nidulans), this protein is Phycobilisome 7.8 kDa linker polypeptide, allophycocyanin-associated, core (apcC).